A 350-amino-acid polypeptide reads, in one-letter code: Nicotinate-nucleotide--dimethylbenzimidazole phosphoribosyltransferase (350 aa).

The Proton acceptor role is filled by Glu316.

This sequence belongs to the CobT family.

The enzyme catalyses 5,6-dimethylbenzimidazole + nicotinate beta-D-ribonucleotide = alpha-ribazole 5'-phosphate + nicotinate + H(+). It participates in nucleoside biosynthesis; alpha-ribazole biosynthesis; alpha-ribazole from 5,6-dimethylbenzimidazole: step 1/2. Catalyzes the synthesis of alpha-ribazole-5'-phosphate from nicotinate mononucleotide (NAMN) and 5,6-dimethylbenzimidazole (DMB). This Pseudomonas syringae pv. syringae (strain B728a) protein is Nicotinate-nucleotide--dimethylbenzimidazole phosphoribosyltransferase.